The primary structure comprises 397 residues: MKVIDGTIASPLGFSADGLHAGFKKRKMDFGWIVSEKPASVAGVYTTNKVIAAPLIVTKTSVKKAGKMRAIVVNSGVANSCTGTQGLEDAYTMQEWTAEKLGVEPDMIGVASTGIIGELLPMDTLKNGLSKLVVNGNANDFAKAILTTDTATKTIAVTETFGRDVVTMAGVAKGSGMIHPNMATMLGFITCDANISSDTLQLALSQNVEKTFNQITVDGDTSTNDMVLVMSNGCALNDEILPDTPEFDKFSKMLNFVMQELAKKIAKDGEGANKLIQVDVVNAPNALDARMMAKSVVGSSLVKTAIFGEDPNWGRILAAVGYAGVDVPVDNVDIMIGGLPVMLASSPVTFDDEEMKDIMHGDEVTITVDLHSGQEKGTAWGCDLSYDYVKINALYHT.

6 residues coordinate substrate: T147, K173, T184, E270, N392, and T397. T184 serves as the catalytic Nucleophile.

It belongs to the ArgJ family. In terms of assembly, heterotetramer of two alpha and two beta chains.

It localises to the cytoplasm. The enzyme catalyses N(2)-acetyl-L-ornithine + L-glutamate = N-acetyl-L-glutamate + L-ornithine. It catalyses the reaction L-glutamate + acetyl-CoA = N-acetyl-L-glutamate + CoA + H(+). It participates in amino-acid biosynthesis; L-arginine biosynthesis; L-ornithine and N-acetyl-L-glutamate from L-glutamate and N(2)-acetyl-L-ornithine (cyclic): step 1/1. It functions in the pathway amino-acid biosynthesis; L-arginine biosynthesis; N(2)-acetyl-L-ornithine from L-glutamate: step 1/4. Functionally, catalyzes two activities which are involved in the cyclic version of arginine biosynthesis: the synthesis of N-acetylglutamate from glutamate and acetyl-CoA as the acetyl donor, and of ornithine by transacetylation between N(2)-acetylornithine and glutamate. This is Arginine biosynthesis bifunctional protein ArgJ from Streptococcus thermophilus (strain ATCC BAA-250 / LMG 18311).